The chain runs to 532 residues: Amidophosphoribosyltransferase 3, chloroplastic (532 aa).

A chloroplast-targeting transit peptide spans 1–59; that stretch reads MAFSVEEISSILPNSLSANPRNVSQNTISPSFFKPSLKPYASKTLISLSCRRSLSPVFS. The active-site Nucleophile is cysteine 77. One can recognise a Glutamine amidotransferase type-2 domain in the interval 77-296; sequence CGVVGIHGDP…PGEIVVVDRN (220 aa). Residues cysteine 313, cysteine 459, cysteine 511, and cysteine 514 each coordinate [4Fe-4S] cluster.

This sequence in the C-terminal section; belongs to the purine/pyrimidine phosphoribosyltransferase family. The cofactor is [4Fe-4S] cluster. Mg(2+) serves as cofactor. In terms of tissue distribution, mostly expressed at low levels in leaves, and, to a lower extent, in cotyledons.

It localises to the plastid. The protein resides in the chloroplast stroma. It catalyses the reaction 5-phospho-beta-D-ribosylamine + L-glutamate + diphosphate = 5-phospho-alpha-D-ribose 1-diphosphate + L-glutamine + H2O. It participates in purine metabolism; IMP biosynthesis via de novo pathway; N(1)-(5-phospho-D-ribosyl)glycinamide from 5-phospho-alpha-D-ribose 1-diphosphate: step 1/2. With respect to regulation, inhibited by the phenyltriazole acetic acid compound [5-(4-chlorophenyl)-1-isopropyl-1H-[1,2,4]triazol-3-yl]-acetic acid (DAS734), a bleaching herbicide. Repressed by AMP, ADP, ATP and GTP, and slightly by GMP. Functionally, catalyzes the first committed step of 'de novo' purine biosynthesis from glutamine. This Arabidopsis thaliana (Mouse-ear cress) protein is Amidophosphoribosyltransferase 3, chloroplastic (ASE3).